The primary structure comprises 511 residues: N-acetylgalactosamine-6-O-sulfatase (511 aa).

Serine 83 bears the 3-oxoalanine (Ser) mark.

Belongs to the sulfatase family. In terms of processing, the conversion to 3-oxoalanine (also known as C-formylglycine, FGly), of a serine or cysteine residue in prokaryotes and of a cysteine residue in eukaryotes, is critical for catalytic activity.

Functionally, exosulfatase involved in the degradation of the glycosaminoglycans (GAGs) chondroitin sulfate (CS) and dermatan sulfate (DS). Catalyzes the hydrolysis of the 6-sulfate groups of the N-acetyl-D-galactosamine 6-sulfate units. GAG-specific sulfatases play a key role in the persistence of the major human gut symbiont B.thetaiotaomicron in the host gastrointestinal tract. The polypeptide is N-acetylgalactosamine-6-O-sulfatase (Bacteroides thetaiotaomicron (strain ATCC 29148 / DSM 2079 / JCM 5827 / CCUG 10774 / NCTC 10582 / VPI-5482 / E50)).